We begin with the raw amino-acid sequence, 654 residues long: Macrolide export ATP-binding/permease protein MacB (654 aa).

One can recognise an ABC transporter domain in the interval 6–244 (IELRGLRREF…RAGDAPTRQP (239 aa)). 42–49 (GASGSGKS) contributes to the ATP binding site. 4 helical membrane passes run 278-298 (FLTM…VAVG), 527-547 (LTLM…IGVM), 584-604 (VVCL…AALF), and 619-639 (SIAA…YLPA).

Belongs to the ABC transporter superfamily. Macrolide exporter (TC 3.A.1.122) family. In terms of assembly, homodimer.

It localises to the cell inner membrane. Its function is as follows. Non-canonical ABC transporter that contains transmembrane domains (TMD), which form a pore in the inner membrane, and an ATP-binding domain (NBD), which is responsible for energy generation. Confers resistance against macrolides. The chain is Macrolide export ATP-binding/permease protein MacB from Rhodopseudomonas palustris (strain HaA2).